Consider the following 188-residue polypeptide: Putative manganese efflux pump MntP (188 aa).

6 consecutive transmembrane segments (helical) span residues Leu3–Gly23, Leu41–Ala61, Ser62–Gly82, Leu107–Leu129, Ala143–Gly163, and Ile168–Gly188.

This sequence belongs to the MntP (TC 9.B.29) family.

Its subcellular location is the cell inner membrane. In terms of biological role, probably functions as a manganese efflux pump. The protein is Putative manganese efflux pump MntP of Klebsiella pneumoniae subsp. pneumoniae (strain ATCC 700721 / MGH 78578).